The sequence spans 1030 residues: Teashirt homolog 2 (1030 aa).

The segment at 1-120 (MPRRKQQAPK…THPKLPSEPH (120 aa)) is disordered. A coiled-coil region spans residues 11–42 (RAAGYAQEEVLKEEEEIKEEEEEEEDSGSVAQ). Residues 21 to 37 (LKEEEEIKEEEEEEEDS) show a composition bias toward acidic residues. Polar residues-rich tracts occupy residues 39–49 (SVAQHQSSNDT) and 66–95 (SCQN…QVSD). The span at 103-120 (DVSDKKANTHPKLPSEPH) shows a compositional bias: basic and acidic residues. K189 is covalently cross-linked (Glycyl lysine isopeptide (Lys-Gly) (interchain with G-Cter in SUMO2)). 2 C2H2-type zinc fingers span residues 216–240 (FRCR…ETGH) and 276–300 (LKCM…KTKH). The segment at 240–266 (HYQDDNRKKDKLRPTSYSKPRKRAFQD) is disordered. Glycyl lysine isopeptide (Lys-Gly) (interchain with G-Cter in SUMO2) cross-links involve residues K307 and K316. Residues 328 to 348 (VNRPCSPDSTTGSLADSFSSQ) are disordered. Residues 334 to 348 (PDSTTGSLADSFSSQ) are compositionally biased toward polar residues. The C2H2-type 3; atypical zinc-finger motif lies at 381–405 (LKCMECGSSHDTLQQLTTHMMVTGH). A Glycyl lysine isopeptide (Lys-Gly) (interchain with G-Cter in SUMO2) cross-link involves residue K418. A compositionally biased stretch (polar residues) spans 432–459 (SLSETPNSESLAPKPSSNSPSECTASTT). Residues 432–488 (SLSETPNSESLAPKPSSNSPSECTASTTELKKESKKEKGEGIEDEQGVKSEDYEDSL) form a disordered region. The span at 460–482 (ELKKESKKEKGEGIEDEQGVKSE) shows a compositional bias: basic and acidic residues. Glycyl lysine isopeptide (Lys-Gly) (interchain with G-Cter in SUMO2) cross-links involve residues K462, K480, K497, and K601. 2 stretches are compositionally biased toward basic and acidic residues: residues 608–623 (DEVV…HEEA) and 633–664 (SFSK…KPEP). Disordered stretches follow at residues 608–687 (DEVV…LPSI), 703–726 (KATE…VFHK), and 759–784 (QPID…SPPQ). K652 participates in a covalent cross-link: Glycyl lysine isopeptide (Lys-Gly) (interchain with G-Cter in SUMO2). The span at 710 to 722 (SPSCSSPNSSTSP) shows a compositional bias: low complexity. The segment covering 773–783 (SSQAQSCTSPP) has biased composition (polar residues). Glycyl lysine isopeptide (Lys-Gly) (interchain with G-Cter in SUMO2) cross-links involve residues K796 and K816. The segment at residues 837–907 (RKGRQSNWNP…NVKYQLRKTG (71 aa)) is a DNA-binding region (homeobox). The C2H2-type 4 zinc finger occupies 922–944 (FYCSDCASQFRTPSTYISHLESH). K962 is covalently cross-linked (Glycyl lysine isopeptide (Lys-Gly) (interchain with G-Cter in SUMO2)). Disordered stretches follow at residues 965-987 (QEIS…EDTD) and 1009-1030 (LSKT…VDEE). Residues 968–977 (SRVSSAQRSP) show a composition bias toward polar residues. S976 is modified (phosphoserine). The C2H2-type 5 zinc-finger motif lies at 990-1013 (FKCKLCRRTFVSKHAVKLHLSKTH).

This sequence belongs to the teashirt C2H2-type zinc-finger protein family. As to quaternary structure, interacts (via homeobox domain) with APBB1 (via PID domain 1). Post-translationally, sumoylated.

The protein localises to the nucleus. Probable transcriptional regulator involved in developmental processes. May act as a transcriptional repressor (Potential). The sequence is that of Teashirt homolog 2 (Tshz2) from Mus musculus (Mouse).